A 114-amino-acid polypeptide reads, in one-letter code: MNIYDKVHELANELKECEEVKNFKKYKKAVEAKESSKKMVEDFRKVQLQAYSEQMEKGAASQETMEKLENIGKIISMDLDVSNYMQAEVKFGVLWEDIIKILGKAVDDDFVDHK.

It belongs to the UPF0342 family.

In Clostridium novyi (strain NT), this protein is UPF0342 protein NT01CX_2274.